The primary structure comprises 397 residues: Tyrosine--tRNA ligase (397 aa).

Positions 39–48 (PTAPDLHLGH) match the 'HIGH' region motif. A 'KMSKS' region motif is present at residues 223–227 (KMSKS). Lys-226 lines the ATP pocket. One can recognise an S4 RNA-binding domain in the interval 334–395 (YPIANLVHDL…GKRKFAKIRL (62 aa)).

It belongs to the class-I aminoacyl-tRNA synthetase family. TyrS type 2 subfamily. As to quaternary structure, homodimer.

Its subcellular location is the cytoplasm. The enzyme catalyses tRNA(Tyr) + L-tyrosine + ATP = L-tyrosyl-tRNA(Tyr) + AMP + diphosphate + H(+). Its function is as follows. Catalyzes the attachment of tyrosine to tRNA(Tyr) in a two-step reaction: tyrosine is first activated by ATP to form Tyr-AMP and then transferred to the acceptor end of tRNA(Tyr). This Methylococcus capsulatus (strain ATCC 33009 / NCIMB 11132 / Bath) protein is Tyrosine--tRNA ligase.